The following is a 340-amino-acid chain: Coproporphyrin III ferrochelatase (340 aa).

Residues serine 52 and tyrosine 116 each coordinate Fe-coproporphyrin III. Residues histidine 172 and glutamate 255 each coordinate Fe(2+).

This sequence belongs to the ferrochelatase family.

The protein localises to the cytoplasm. The catalysed reaction is Fe-coproporphyrin III + 2 H(+) = coproporphyrin III + Fe(2+). It functions in the pathway porphyrin-containing compound metabolism; protoheme biosynthesis. Involved in coproporphyrin-dependent heme b biosynthesis. Catalyzes the insertion of ferrous iron into coproporphyrin III to form Fe-coproporphyrin III. The sequence is that of Coproporphyrin III ferrochelatase from Mycobacterium ulcerans (strain Agy99).